A 60-amino-acid polypeptide reads, in one-letter code: UPF0434 protein YcaR (60 aa).

It belongs to the UPF0434 family.

This is UPF0434 protein YcaR from Escherichia fergusonii (strain ATCC 35469 / DSM 13698 / CCUG 18766 / IAM 14443 / JCM 21226 / LMG 7866 / NBRC 102419 / NCTC 12128 / CDC 0568-73).